A 693-amino-acid polypeptide reads, in one-letter code: Elongation factor G (693 aa).

In terms of domain architecture, tr-type G spans 8–282 (EKTRNIGIMA…AVIDYLPSPL (275 aa)). GTP contacts are provided by residues 17 to 24 (AHVDAGKT), 81 to 85 (DTPGH), and 135 to 138 (NKMD).

The protein belongs to the TRAFAC class translation factor GTPase superfamily. Classic translation factor GTPase family. EF-G/EF-2 subfamily.

The protein localises to the cytoplasm. Functionally, catalyzes the GTP-dependent ribosomal translocation step during translation elongation. During this step, the ribosome changes from the pre-translocational (PRE) to the post-translocational (POST) state as the newly formed A-site-bound peptidyl-tRNA and P-site-bound deacylated tRNA move to the P and E sites, respectively. Catalyzes the coordinated movement of the two tRNA molecules, the mRNA and conformational changes in the ribosome. The sequence is that of Elongation factor G from Streptococcus suis (strain 05ZYH33).